The primary structure comprises 466 residues: Ribulose bisphosphate carboxylase large chain (466 aa).

The residue at position 5 (Lys5) is an N6,N6,N6-trimethyllysine. Positions 114 and 164 each coordinate substrate. Lys166 acts as the Proton acceptor in catalysis. Lys168 provides a ligand contact to substrate. Lys192, Asp194, and Glu195 together coordinate Mg(2+). N6-carboxylysine is present on Lys192. His285 serves as the catalytic Proton acceptor. Arg286, His318, and Ser370 together coordinate substrate.

Belongs to the RuBisCO large chain family. Type I subfamily. In terms of assembly, heterohexadecamer of 8 large chains and 8 small chains; disulfide-linked. The disulfide link is formed within the large subunit homodimers. The cofactor is Mg(2+). Post-translationally, the disulfide bond which can form in the large chain dimeric partners within the hexadecamer appears to be associated with oxidative stress and protein turnover.

It is found in the plastid. It localises to the chloroplast. The enzyme catalyses 2 (2R)-3-phosphoglycerate + 2 H(+) = D-ribulose 1,5-bisphosphate + CO2 + H2O. The catalysed reaction is D-ribulose 1,5-bisphosphate + O2 = 2-phosphoglycolate + (2R)-3-phosphoglycerate + 2 H(+). RuBisCO catalyzes two reactions: the carboxylation of D-ribulose 1,5-bisphosphate, the primary event in carbon dioxide fixation, as well as the oxidative fragmentation of the pentose substrate in the photorespiration process. Both reactions occur simultaneously and in competition at the same active site. The protein is Ribulose bisphosphate carboxylase large chain of Silene gallica (Common catchfly).